The chain runs to 894 residues: CWF19-like protein 2 (894 aa).

The disordered stretch occupies residues 1-147 (MATSMAAASG…DEKSGKDDTQ (147 aa)). Basic and acidic residues predominate over residues 13–56 (ESAKSIEERKEQTRNARAEVLRQAKANFEKEERRKELKRLRGED). A coiled-coil region spans residues 13–107 (ESAKSIEERK…KKQKYEKNNE (95 aa)). Position 75 is a phosphoserine (Ser-75). A compositionally biased stretch (basic residues) spans 76-99 (VKKKKKKDKHSKKAKKEKKKKSKK). The span at 128-147 (PDKEKAWKVKDEKSGKDDTQ) shows a compositional bias: basic and acidic residues. A coiled-coil region spans residues 166 to 281 (SSSSLKAEKE…AEKAASTKED (116 aa)). Residue Lys-171 forms a Glycyl lysine isopeptide (Lys-Gly) (interchain with G-Cter in SUMO2) linkage. Over residues 270 to 284 (EDAEKAASTKEDYRR) the composition is skewed to basic and acidic residues. Positions 270 to 483 (EDAEKAASTK…STFAGSPERE (214 aa)) are disordered. Over residues 320–330 (TTDTAKNSNNE) the composition is skewed to polar residues. Positions 332 to 352 (FIGDEKDKRPGSLETCRRESN) are enriched in basic and acidic residues. Phosphoserine is present on residues Ser-360 and Ser-372. Basic and acidic residues-rich tracts occupy residues 410–430 (KNSE…DKKH) and 440–473 (TDEH…RDTK). Phosphoserine occurs at positions 479 and 484. Residues 502–530 (KAEMMGNMELAEQLKVQLEKANKFKETIT) are a coiled coil. Residues 561-583 (NTPGKSLESQGGRRKRQMVSTHE) are disordered. Lys-604 participates in a covalent cross-link: Glycyl lysine isopeptide (Lys-Gly) (interchain with G-Cter in SUMO2). The stretch at 644-675 (AAERERLGEEEENQRKKAIAEHRSLAAQMEKC) forms a coiled coil.

This sequence belongs to the CWF19 family.

The sequence is that of CWF19-like protein 2 (CWF19L2) from Homo sapiens (Human).